The primary structure comprises 436 residues: Probable glucose-6-phosphate isomerase (436 aa).

E272 functions as the Proton donor in the catalytic mechanism. Catalysis depends on residues H293 and K404.

It belongs to the GPI family.

The protein resides in the cytoplasm. It catalyses the reaction alpha-D-glucose 6-phosphate = beta-D-fructose 6-phosphate. It participates in carbohydrate biosynthesis; gluconeogenesis. Its pathway is carbohydrate degradation; glycolysis; D-glyceraldehyde 3-phosphate and glycerone phosphate from D-glucose: step 2/4. Its function is as follows. Catalyzes the reversible isomerization of glucose-6-phosphate to fructose-6-phosphate. The sequence is that of Probable glucose-6-phosphate isomerase from Haloarcula marismortui (strain ATCC 43049 / DSM 3752 / JCM 8966 / VKM B-1809) (Halobacterium marismortui).